Reading from the N-terminus, the 108-residue chain is Putative lipid-binding protein AIR1B (108 aa).

Residues 1 to 23 (MAPRTSLALFVSLNLLFFTCTSA) form the signal peptide. Disulfide bonds link C28/C55, C35/C54, and C71/C107.

Belongs to the plant LTP family. PEARLI1 subfamily.

The protein localises to the secreted. This chain is Putative lipid-binding protein AIR1B (AIR1B), found in Arabidopsis thaliana (Mouse-ear cress).